The following is a 252-amino-acid chain: Triosephosphate isomerase (252 aa).

Substrate is bound at residue 10-12; sequence NWK. His-96 acts as the Electrophile in catalysis. Glu-168 functions as the Proton acceptor in the catalytic mechanism. Residues Gly-174, Ser-214, and 235 to 236 each bind substrate; that span reads GG.

It belongs to the triosephosphate isomerase family. As to quaternary structure, homodimer.

The protein localises to the cytoplasm. It catalyses the reaction D-glyceraldehyde 3-phosphate = dihydroxyacetone phosphate. It participates in carbohydrate biosynthesis; gluconeogenesis. Its pathway is carbohydrate degradation; glycolysis; D-glyceraldehyde 3-phosphate from glycerone phosphate: step 1/1. Functionally, involved in the gluconeogenesis. Catalyzes stereospecifically the conversion of dihydroxyacetone phosphate (DHAP) to D-glyceraldehyde-3-phosphate (G3P). The polypeptide is Triosephosphate isomerase (Streptococcus pyogenes serotype M5 (strain Manfredo)).